The chain runs to 245 residues: 4-hydroxy-tetrahydrodipicolinate reductase (245 aa).

Residues 8 to 13 (GSTGKM), 78 to 80 (GTT), and 102 to 105 (SANM) contribute to the NAD(+) site. Histidine 134 serves as the catalytic Proton donor/acceptor. Histidine 135 contributes to the (S)-2,3,4,5-tetrahydrodipicolinate binding site. Lysine 138 acts as the Proton donor in catalysis. 144–145 (GT) is a (S)-2,3,4,5-tetrahydrodipicolinate binding site.

The protein belongs to the DapB family.

The protein resides in the cytoplasm. The enzyme catalyses (S)-2,3,4,5-tetrahydrodipicolinate + NAD(+) + H2O = (2S,4S)-4-hydroxy-2,3,4,5-tetrahydrodipicolinate + NADH + H(+). The catalysed reaction is (S)-2,3,4,5-tetrahydrodipicolinate + NADP(+) + H2O = (2S,4S)-4-hydroxy-2,3,4,5-tetrahydrodipicolinate + NADPH + H(+). It functions in the pathway amino-acid biosynthesis; L-lysine biosynthesis via DAP pathway; (S)-tetrahydrodipicolinate from L-aspartate: step 4/4. Functionally, catalyzes the conversion of 4-hydroxy-tetrahydrodipicolinate (HTPA) to tetrahydrodipicolinate. In Rickettsia akari (strain Hartford), this protein is 4-hydroxy-tetrahydrodipicolinate reductase.